Here is an 81-residue protein sequence, read N- to C-terminus: Defensin-like protein 144 (81 aa).

The N-terminal stretch at 1–24 (MKNSFRFSFTVITTFIICVLVSGA) is a signal peptide. Cystine bridges form between C30–C74, C42–C61, C47–C69, and C51–C71.

This sequence belongs to the DEFL family.

It is found in the secreted. In Arabidopsis thaliana (Mouse-ear cress), this protein is Defensin-like protein 144 (LCR10).